The following is a 448-amino-acid chain: Signal recognition particle 54 kDa protein (448 aa).

Residues 107–114 (GIQGSGKT), 189–193 (DSAGR), and 247–250 (TKLD) contribute to the GTP site.

Belongs to the GTP-binding SRP family. SRP54 subfamily. As to quaternary structure, part of the signal recognition particle protein translocation system, which is composed of SRP and FtsY. Archaeal SRP consists of a 7S RNA molecule of 300 nucleotides and two protein subunits: SRP54 and SRP19.

It localises to the cytoplasm. It carries out the reaction GTP + H2O = GDP + phosphate + H(+). Involved in targeting and insertion of nascent membrane proteins into the cytoplasmic membrane. Binds to the hydrophobic signal sequence of the ribosome-nascent chain (RNC) as it emerges from the ribosomes. The SRP-RNC complex is then targeted to the cytoplasmic membrane where it interacts with the SRP receptor FtsY. This Thermococcus onnurineus (strain NA1) protein is Signal recognition particle 54 kDa protein.